The following is a 155-amino-acid chain: 6,7-dimethyl-8-ribityllumazine synthase (155 aa).

Residues F22, 56-58 (AFE), and 80-82 (AVI) contribute to the 5-amino-6-(D-ribitylamino)uracil site. (2S)-2-hydroxy-3-oxobutyl phosphate is bound at residue 85 to 86 (ST). H88 functions as the Proton donor in the catalytic mechanism. F113 provides a ligand contact to 5-amino-6-(D-ribitylamino)uracil. R127 lines the (2S)-2-hydroxy-3-oxobutyl phosphate pocket.

The protein belongs to the DMRL synthase family.

It catalyses the reaction (2S)-2-hydroxy-3-oxobutyl phosphate + 5-amino-6-(D-ribitylamino)uracil = 6,7-dimethyl-8-(1-D-ribityl)lumazine + phosphate + 2 H2O + H(+). It participates in cofactor biosynthesis; riboflavin biosynthesis; riboflavin from 2-hydroxy-3-oxobutyl phosphate and 5-amino-6-(D-ribitylamino)uracil: step 1/2. In terms of biological role, catalyzes the formation of 6,7-dimethyl-8-ribityllumazine by condensation of 5-amino-6-(D-ribitylamino)uracil with 3,4-dihydroxy-2-butanone 4-phosphate. This is the penultimate step in the biosynthesis of riboflavin. In Bifidobacterium longum subsp. infantis (strain ATCC 15697 / DSM 20088 / JCM 1222 / NCTC 11817 / S12), this protein is 6,7-dimethyl-8-ribityllumazine synthase.